The primary structure comprises 94 residues: Pyrimidine/purine nucleoside phosphorylase (94 aa).

This sequence belongs to the nucleoside phosphorylase PpnP family.

It carries out the reaction a purine D-ribonucleoside + phosphate = a purine nucleobase + alpha-D-ribose 1-phosphate. The catalysed reaction is adenosine + phosphate = alpha-D-ribose 1-phosphate + adenine. It catalyses the reaction cytidine + phosphate = cytosine + alpha-D-ribose 1-phosphate. The enzyme catalyses guanosine + phosphate = alpha-D-ribose 1-phosphate + guanine. It carries out the reaction inosine + phosphate = alpha-D-ribose 1-phosphate + hypoxanthine. The catalysed reaction is thymidine + phosphate = 2-deoxy-alpha-D-ribose 1-phosphate + thymine. It catalyses the reaction uridine + phosphate = alpha-D-ribose 1-phosphate + uracil. The enzyme catalyses xanthosine + phosphate = alpha-D-ribose 1-phosphate + xanthine. Catalyzes the phosphorolysis of diverse nucleosides, yielding D-ribose 1-phosphate and the respective free bases. Can use uridine, adenosine, guanosine, cytidine, thymidine, inosine and xanthosine as substrates. Also catalyzes the reverse reactions. In Klebsiella pneumoniae (strain 342), this protein is Pyrimidine/purine nucleoside phosphorylase.